Here is a 407-residue protein sequence, read N- to C-terminus: Chorismate synthase (407 aa).

The NADP(+) site is built by Arg-40 and Arg-46. FMN-binding positions include 140–142 (RSS), 261–262 (QA), Gly-305, 320–324 (KPIST), and Arg-346.

Belongs to the chorismate synthase family. In terms of assembly, homotetramer. It depends on FMNH2 as a cofactor.

It carries out the reaction 5-O-(1-carboxyvinyl)-3-phosphoshikimate = chorismate + phosphate. It participates in metabolic intermediate biosynthesis; chorismate biosynthesis; chorismate from D-erythrose 4-phosphate and phosphoenolpyruvate: step 7/7. Catalyzes the anti-1,4-elimination of the C-3 phosphate and the C-6 proR hydrogen from 5-enolpyruvylshikimate-3-phosphate (EPSP) to yield chorismate, which is the branch point compound that serves as the starting substrate for the three terminal pathways of aromatic amino acid biosynthesis. This reaction introduces a second double bond into the aromatic ring system. This chain is Chorismate synthase, found in Corynebacterium glutamicum (strain R).